The following is a 148-amino-acid chain: SsrA-binding protein (148 aa).

The tract at residues 123–148 (KLHDKRETEKKRDWEREKARIMRSAT) is disordered. Positions 126 to 142 (DKRETEKKRDWEREKAR) are enriched in basic and acidic residues.

It belongs to the SmpB family.

Its subcellular location is the cytoplasm. Functionally, required for rescue of stalled ribosomes mediated by trans-translation. Binds to transfer-messenger RNA (tmRNA), required for stable association of tmRNA with ribosomes. tmRNA and SmpB together mimic tRNA shape, replacing the anticodon stem-loop with SmpB. tmRNA is encoded by the ssrA gene; the 2 termini fold to resemble tRNA(Ala) and it encodes a 'tag peptide', a short internal open reading frame. During trans-translation Ala-aminoacylated tmRNA acts like a tRNA, entering the A-site of stalled ribosomes, displacing the stalled mRNA. The ribosome then switches to translate the ORF on the tmRNA; the nascent peptide is terminated with the 'tag peptide' encoded by the tmRNA and targeted for degradation. The ribosome is freed to recommence translation, which seems to be the essential function of trans-translation. The sequence is that of SsrA-binding protein from Burkholderia pseudomallei (strain 1710b).